The primary structure comprises 400 residues: Egl nine homolog 1 (400 aa).

N-acetylalanine is present on Ala2. Positions 6 to 20 are required for nuclear export; it reads GGPGVLSASERDRQY. Ser12 carries the phosphoserine modification. Zn(2+)-binding residues include Cys21, Cys24, Cys33, Cys36, Cys42, His46, His54, and Cys58. An MYND-type; atypical zinc finger spans residues 21–58; that stretch reads CELCGKMENLLRCGRCRSSFYCCKEHQRQDWKKHKLVC. The segment covering 62 to 74 has biased composition (low complexity); it reads EAPRAQPAPAQPR. Residues 62–161 are disordered; it reads EAPRAQPAPA…PGGGLRPNGQ (100 aa). A Phosphoserine modification is found at Ser114. Residues 142-157 show a composition bias toward gly residues; it reads AGGGPGEALSPGGGLR. 2 positions are modified to S-nitrosocysteine: Cys178 and Cys185. The beta(2)beta(3) 'finger-like' loop stretch occupies residues 218 to 228; sequence VSQKSDSSKDI. Residues 271-369 form the Fe2OG dioxygenase domain; that stretch reads GRTKAMVACY…RYAITVWYFD (99 aa). Cys279 carries the post-translational modification S-nitrosocysteine. Residues His290 and Asp292 each contribute to the Fe cation site. An S-nitrosocysteine mark is found at Cys300 and Cys303. Residue His351 participates in Fe cation binding. Residue Arg360 coordinates 2-oxoglutarate.

Monomer. Interacts with ING4; the interaction inhibits the hydroxylation of HIF alpha proteins. Interacts with PTGES3 (via PXLE motif); thereby recruiting EGLN1 to the HSP90 pathway to facilitate HIF alpha proteins hydroxylation. Interacts with LIMD1. Found in a complex composed of LIMD1, VHL, EGLN1/PHD2, ELOB and CUL2. Interacts with EPAS1. Interacts with CBFA2T3 and HIF1A. Fe(2+) is required as a cofactor. L-ascorbate serves as cofactor. Post-translationally, S-nitrosylation inhibits the enzyme activity up to 60% under aerobic conditions. Chelation of Fe(2+) has no effect on the S-nitrosylation. It is uncertain whether nitrosylation occurs on Cys-300 or Cys-303. As to expression, expressed in heart, brain liver, skeletal muscle and kidney. Low levels were detected in the lung. Constitutively expressed during differentiation of C2C12 skeletal myocytes.

Its subcellular location is the cytoplasm. The protein localises to the nucleus. It carries out the reaction L-prolyl-[hypoxia-inducible factor alpha subunit] + 2-oxoglutarate + O2 = trans-4-hydroxy-L-prolyl-[hypoxia-inducible factor alpha subunit] + succinate + CO2. Functionally, cellular oxygen sensor that catalyzes, under normoxic conditions, the post-translational formation of 4-hydroxyproline in hypoxia-inducible factor (HIF) alpha proteins. Hydroxylates a specific proline found in each of the oxygen-dependent degradation (ODD) domains (N-terminal, NODD, and C-terminal, CODD) of HIF1A. Also hydroxylates HIF2A. Has a preference for the CODD site for both HIF1A and HIF1B. Hydroxylated HIFs are then targeted for proteasomal degradation via the von Hippel-Lindau ubiquitination complex. Under hypoxic conditions, the hydroxylation reaction is attenuated allowing HIFs to escape degradation resulting in their translocation to the nucleus, heterodimerization with HIF1B, and increased expression of hypoxy-inducible genes. EGLN1 is the most important isozyme under normoxia and, through regulating the stability of HIF1, involved in various hypoxia-influenced processes such as angiogenesis in retinal and cardiac functionality. Target proteins are preferentially recognized via a LXXLAP motif. The polypeptide is Egl nine homolog 1 (Egln1) (Mus musculus (Mouse)).